A 609-amino-acid chain; its full sequence is Forkhead box protein O (609 aa).

Disordered regions lie at residues 1–89 and 181–263; these read MDGF…KNSS and KSVR…SSCG. Threonine 43 is modified (phosphothreonine; by PKB/AKT1). Positions 62 to 79 are enriched in polar residues; it reads TKASNQQLASGDPQQAMQ. A compositionally biased stretch (low complexity) spans 80–89; the sequence is NANAAKKNSS. Residues 94 to 200 constitute a DNA-binding region (fork-head); it reads WGNLSYADLI…ETSRYEKRRG (107 aa). Serine 189 is subject to Phosphoserine; by PKB/AKT1. Composition is skewed to polar residues over residues 220-229 and 254-263; these read ATPSPSSSVS and RASSNASSCG. Position 257 is a phosphoserine; by PKB/AKT1 (serine 257). A phosphoserine mark is found at serine 260, serine 261, and serine 266. 2 disordered regions span residues 321–365 and 384–411; these read AASG…QGQG and RDGL…DSLN. Over residues 327-339 the composition is skewed to pro residues; sequence TQPPPPYQPPQQP. A compositionally biased stretch (polar residues) spans 388 to 397; the sequence is SPNSVTTTMS.

Interacts with melt.

It localises to the cytoplasm. The protein resides in the nucleus. Transcription factor involved in the regulation of the insulin signaling pathway. Consistently activates both the downstream target Thor\d4EBP and the feedback control target InR. Involved in negative regulation of the cell cycle, modulating cell growth and proliferation. In response to cellular stresses, such as nutrient deprivation or increased levels of reactive oxygen species, foxo is activated and inhibits growth through the action of target genes such as Thor. Foxo activated in the adult fat body can regulate lifespan in adults; an insulin peptide itself may function as one secondary messenger of insulin-regulated aging. Also regulates Lip4, homolog of human acid lipases, thereby acting as a key modulator of lipid metabolism by insulin signaling and integrates insulin responses to glucose and lipid homeostasis. In Drosophila virilis (Fruit fly), this protein is Forkhead box protein O.